We begin with the raw amino-acid sequence, 825 residues long: Osmosensitive cation channel TMEM63C (825 aa).

Residues 1–50 (MAFESWPAGGVRPVEELDVRSFLMEENSTAERCYRSHSRSSVLQGLPFGG) lie on the Extracellular side of the membrane. The helical transmembrane segment at 51–75 (VPTVLAINVVLWLILLLIFSCLRKA) threads the bilayer. At 76–141 (AWDYGRLALL…KDEEIRSKCG (66 aa)) the chain is on the cytoplasmic side. Residues 98–117 (EQSEKEKTPSDSSPSDSETK) are disordered. A helical transmembrane segment spans residues 142–174 (IDAVTYLSFQRHIILLMMVVCLLSLTIILPVNL). The Extracellular portion of the chain corresponds to 175–198 (SGNLLGDNPENFGRTTVVNVPAQN). Residues 199–223 (IFLWLHSIFALLYFVITVLCMAHHS) traverse the membrane as a helical segment. At 224 to 418 (SRLEYREDEK…IIWENLSVCG (195 aa)) the chain is on the cytoplasmic side. The helical transmembrane segment at 419-448 (PRWWLRCILLNILLFLLLFFLTTPAIIVNT) threads the bilayer. At 449–463 (MDKFNVTRPVESLRN) the chain is on the extracellular side. Residues 464 to 493 (PVITQFFPTLLLWAFSILLPFIVYYSSFFE) form a helical membrane-spanning segment. Topologically, residues 494–497 (YHWT) are cytoplasmic. A helical membrane pass occupies residues 498-534 (RSGENQVTMHKCFLLLVFMVIILPSLGLSSLNLFFRW). Residues 535–557 (LFDVRFLDETDVKFQCVFLPDNG) are Extracellular-facing. A helical transmembrane segment spans residues 558–590 (AFFVNYVITSSLIGTAMELLRIPALLVYSLRLC). The Cytoplasmic portion of the chain corresponds to 591–610 (FAKSKAECIHVKISQAYEFQ). A helical membrane pass occupies residues 611–629 (FGLEYAWTMCIFSVSMTYS). Topologically, residues 630-632 (ITC) are extracellular. A helical transmembrane segment spans residues 633–657 (PVIVPFGLLYLVLKHMVDRYNIYYA). Residues 658–664 (YTPTKLN) lie on the Cytoplasmic side of the membrane. Residues 665 to 693 (QRIHAAAISQVVVAPILCMFWLLFFSVLR) traverse the membrane as a helical segment. At 694 to 698 (LGPVQ) the chain is on the extracellular side. A helical transmembrane segment spans residues 699–719 (PITLFTFITLLCSIAFSCFGF). Over 720-825 (CMKKLRADRS…LLMDSPVAFQ (106 aa)) the chain is Cytoplasmic. A disordered region spans residues 777–825 (SPAHQSYGTMVNSQSSVRDAEEDEEKDLEETLETELKDDLLMDSPVAFQ). The segment covering 779–793 (AHQSYGTMVNSQSSV) has biased composition (polar residues). Residues 796–809 (AEEDEEKDLEETLE) show a composition bias toward acidic residues.

This sequence belongs to the CSC1 (TC 1.A.17) family. Monomer.

The protein resides in the endoplasmic reticulum membrane. The protein localises to the cell membrane. The enzyme catalyses Ca(2+)(in) = Ca(2+)(out). Functionally, acts as an osmosensitive cation channel preferentially activated upon hypotonic stress. In contrast to tmem63b, does not show phospholipid scramblase activity. Required for the functional integrity of the kidney glomerular filtration barrier. The chain is Osmosensitive cation channel TMEM63C (tmem63c) from Danio rerio (Zebrafish).